Here is a 238-residue protein sequence, read N- to C-terminus: DNA repair protein RecO (238 aa).

The protein belongs to the RecO family.

Involved in DNA repair and RecF pathway recombination. The chain is DNA repair protein RecO from Anaplasma marginale (strain St. Maries).